The primary structure comprises 280 residues: S-methyl-5'-thioadenosine phosphorylase (280 aa).

Phosphate is bound by residues serine 15, 57 to 58, and 90 to 91; these read RH and TA. Methionine 193 provides a ligand contact to substrate. Residue threonine 194 participates in phosphate binding. 217–219 is a binding site for substrate; it reads DYD.

This sequence belongs to the PNP/MTAP phosphorylase family. MTAP subfamily. In terms of assembly, homotrimer.

The protein resides in the cytoplasm. It is found in the nucleus. The catalysed reaction is S-methyl-5'-thioadenosine + phosphate = 5-(methylsulfanyl)-alpha-D-ribose 1-phosphate + adenine. It participates in amino-acid biosynthesis; L-methionine biosynthesis via salvage pathway; S-methyl-5-thio-alpha-D-ribose 1-phosphate from S-methyl-5'-thioadenosine (phosphorylase route): step 1/1. Catalyzes the reversible phosphorylation of S-methyl-5'-thioadenosine (MTA) to adenine and 5-methylthioribose-1-phosphate. Involved in the breakdown of MTA, a major by-product of polyamine biosynthesis. Responsible for the first step in the methionine salvage pathway after MTA has been generated from S-adenosylmethionine. Has broad substrate specificity with 6-aminopurine nucleosides as preferred substrates. This chain is S-methyl-5'-thioadenosine phosphorylase (mtap), found in Danio rerio (Zebrafish).